The primary structure comprises 458 residues: Methylenetetrahydrofolate--tRNA-(uracil-5-)-methyltransferase TrmFO (458 aa).

FAD is bound at residue 12 to 17 (GAGLAG).

This sequence belongs to the MnmG family. TrmFO subfamily. Requires FAD as cofactor.

The protein localises to the cytoplasm. It catalyses the reaction uridine(54) in tRNA + (6R)-5,10-methylene-5,6,7,8-tetrahydrofolate + NADH + H(+) = 5-methyluridine(54) in tRNA + (6S)-5,6,7,8-tetrahydrofolate + NAD(+). The enzyme catalyses uridine(54) in tRNA + (6R)-5,10-methylene-5,6,7,8-tetrahydrofolate + NADPH + H(+) = 5-methyluridine(54) in tRNA + (6S)-5,6,7,8-tetrahydrofolate + NADP(+). Functionally, catalyzes the folate-dependent formation of 5-methyl-uridine at position 54 (M-5-U54) in all tRNAs. This is Methylenetetrahydrofolate--tRNA-(uracil-5-)-methyltransferase TrmFO from Deinococcus geothermalis (strain DSM 11300 / CIP 105573 / AG-3a).